A 503-amino-acid polypeptide reads, in one-letter code: TGF-beta receptor type-1 (503 aa).

Positions 1 to 29 are cleaved as a signal peptide; it reads MEVAAGAPRSRLLLFVLAATATLAPEATA. Residues 30–126 lie on the Extracellular side of the membrane; it reads FQCFCHLCTK…PPSGLGPVEL (97 aa). Cystine bridges form between C32–C50, C34–C37, C44–C67, C82–C96, and C97–C102. Residue N41 is glycosylated (N-linked (GlcNAc...) asparagine). The helical transmembrane segment at 127-147 threads the bilayer; it reads AAVIAGPVCFVCISLMLMVYI. Topologically, residues 148–503 are cytoplasmic; it reads CHNRTVIHHR…QLSQQEGIKM (356 aa). S165 carries the post-translational modification Phosphoserine. The GS domain maps to 175–204; that stretch reads TTLKDLIYDMTTSGSGSGLPLLVQRTIART. Residues T185 and T186 each carry the phosphothreonine; by TGFBR2 modification. Residues S187, S189, and S191 each carry the phosphoserine; by TGFBR2 modification. Positions 193–194 match the FKBP1A-binding motif; it reads LP. In terms of domain architecture, Protein kinase spans 205–495; it reads IVLQESIGKG…LRIKKTLSQL (291 aa). ATP contacts are provided by residues 211–219 and K232; that span reads IGKGRFGEV. The active-site Proton acceptor is the D333. K391 is covalently cross-linked (Glycyl lysine isopeptide (Lys-Gly) (interchain with G-Cter in SUMO)).

This sequence belongs to the protein kinase superfamily. TKL Ser/Thr protein kinase family. TGFB receptor subfamily. In terms of assembly, homodimer; in the endoplasmic reticulum but also at the cell membrane. Heterohexamer; TGFB1, TGFB2 and TGFB3 homodimeric ligands assemble a functional receptor composed of two TGFBR1 and TGFBR2 heterodimers to form a ligand-receptor heterohexamer. The respective affinity of TGBRB1 and TGFBR2 for the ligands may modulate the kinetics of assembly of the receptor and may explain the different biological activities of TGFB1, TGFB2 and TGFB3. Component of a complex composed of TSC22D1 (via N-terminus), TGFBR1 and TGFBR2; the interaction between TSC22D1 and TGFBR1 is inhibited by SMAD7 and promoted by TGFB1. Interacts with CD109; inhibits TGF-beta receptor activation in keratinocytes. Interacts with RBPMS. Interacts (unphosphorylated) with FKBP1A; prevents TGFBR1 phosphorylation by TGFBR2 and stabilizes it in the inactive conformation. Interacts with SMAD2, SMAD3 and ZFYVE9; ZFYVE9 recruits SMAD2 and SMAD3 to the TGF-beta receptor. Interacts with TRAF6 and MAP3K7; induces MAP3K7 activation by TRAF6. Interacts with PARD6A; involved in TGF-beta induced epithelial to mesenchymal transition. Interacts with NEDD4L. Interacts with SMAD7, SMURF1 and SMURF2; SMAD7 recruits NEDD4L, SMURF1 and SMURF2 to the TGF-beta receptor. Interacts with USP15 and VPS39. Interacts with SDCBP (via C-terminus). Interacts with CAV1 and this interaction is impaired in the presence of SDCBP. Interacts with APPL1; interaction is TGF beta dependent; mediates trafficking of the TGFBR1 from the endosomes to the nucleus via microtubules in a TRAF6-dependent manner. Interacts with GPR50; this interaction promotes the constitutive activation of SMAD signaling pathway. Mg(2+) serves as cofactor. The cofactor is Mn(2+). Phosphorylated at basal levels in the absence of ligand. Activated upon phosphorylation by TGFBR2, mainly in the GS domain. Phosphorylation in the GS domain abrogates FKBP1A-binding. In terms of processing, N-Glycosylated. Post-translationally, ubiquitinated; undergoes ubiquitination catalyzed by several E3 ubiquitin ligases including SMURF1, SMURF2 and NEDD4L2. Results in the proteasomal and/or lysosomal degradation of the receptor thereby negatively regulating its activity. Deubiquitinated by USP15, leading to stabilization of the protein and enhanced TGF-beta signal. Its ubiquitination and proteasome-mediated degradation is negatively regulated by SDCBP.

It localises to the cell membrane. The protein localises to the cell junction. Its subcellular location is the tight junction. The protein resides in the membrane raft. It is found in the cell surface. It catalyses the reaction L-threonyl-[receptor-protein] + ATP = O-phospho-L-threonyl-[receptor-protein] + ADP + H(+). It carries out the reaction L-seryl-[receptor-protein] + ATP = O-phospho-L-seryl-[receptor-protein] + ADP + H(+). With respect to regulation, kept in an inactive conformation by FKBP1A preventing receptor activation in absence of ligand. CD109 is another inhibitor of the receptor. Its function is as follows. Transmembrane serine/threonine kinase forming with the TGF-beta type II serine/threonine kinase receptor, TGFBR2, the non-promiscuous receptor for the TGF-beta cytokines TGFB1, TGFB2 and TGFB3. Transduces the TGFB1, TGFB2 and TGFB3 signal from the cell surface to the cytoplasm and is thus regulating a plethora of physiological and pathological processes including cell cycle arrest in epithelial and hematopoietic cells, control of mesenchymal cell proliferation and differentiation, wound healing, extracellular matrix production, immunosuppression and carcinogenesis. The formation of the receptor complex composed of 2 TGFBR1 and 2 TGFBR2 molecules symmetrically bound to the cytokine dimer results in the phosphorylation and the activation of TGFBR1 by the constitutively active TGFBR2. Activated TGFBR1 phosphorylates SMAD2 which dissociates from the receptor and interacts with SMAD4. The SMAD2-SMAD4 complex is subsequently translocated to the nucleus where it modulates the transcription of the TGF-beta-regulated genes. This constitutes the canonical SMAD-dependent TGF-beta signaling cascade. Also involved in non-canonical, SMAD-independent TGF-beta signaling pathways. For instance, TGFBR1 induces TRAF6 autoubiquitination which in turn results in MAP3K7 ubiquitination and activation to trigger apoptosis. Also regulates epithelial to mesenchymal transition through a SMAD-independent signaling pathway through PARD6A phosphorylation and activation. This is TGF-beta receptor type-1 (TGFBR1) from Sus scrofa (Pig).